We begin with the raw amino-acid sequence, 371 residues long: Anhydro-N-acetylmuramic acid kinase (371 aa).

Residue 10 to 17 participates in ATP binding; that stretch reads GTSLDGID.

Belongs to the anhydro-N-acetylmuramic acid kinase family.

The enzyme catalyses 1,6-anhydro-N-acetyl-beta-muramate + ATP + H2O = N-acetyl-D-muramate 6-phosphate + ADP + H(+). It participates in amino-sugar metabolism; 1,6-anhydro-N-acetylmuramate degradation. Its pathway is cell wall biogenesis; peptidoglycan recycling. Its function is as follows. Catalyzes the specific phosphorylation of 1,6-anhydro-N-acetylmuramic acid (anhMurNAc) with the simultaneous cleavage of the 1,6-anhydro ring, generating MurNAc-6-P. Is required for the utilization of anhMurNAc either imported from the medium or derived from its own cell wall murein, and thus plays a role in cell wall recycling. This is Anhydro-N-acetylmuramic acid kinase from Chromohalobacter salexigens (strain ATCC BAA-138 / DSM 3043 / CIP 106854 / NCIMB 13768 / 1H11).